The sequence spans 401 residues: 3-oxoadipyl-CoA/3-oxo-5,6-dehydrosuberyl-CoA thiolase (401 aa).

Residue Cys90 is the Acyl-thioester intermediate of the active site. Residues His357 and Cys387 each act as proton acceptor in the active site.

Belongs to the thiolase-like superfamily. Thiolase family.

The catalysed reaction is succinyl-CoA + acetyl-CoA = 3-oxoadipyl-CoA + CoA. It catalyses the reaction 2,3-didehydroadipoyl-CoA + acetyl-CoA = 3-oxo-5,6-didehydrosuberyl-CoA + CoA. The protein operates within aromatic compound metabolism; phenylacetate degradation. Functionally, catalyzes the thiolytic cleavage of the beta-keto C8 intermediate 3-oxo-5,6-dehydrosuberyl-CoA with CoA to yield the C6 intermediate 2,3-dehydroadipyl-CoA and acetyl-CoA. Besides it catalyzes also the last step of the pathway, in which 3-oxoadipyl-CoA similarly is cleaved to acetyl-CoA and succinyl-CoA. In Escherichia coli (strain K12), this protein is 3-oxoadipyl-CoA/3-oxo-5,6-dehydrosuberyl-CoA thiolase (paaJ).